A 299-amino-acid polypeptide reads, in one-letter code: Nucleotide-binding protein Moth_0258 (299 aa).

14 to 21 (GLSGAGKT) provides a ligand contact to ATP. A GTP-binding site is contributed by 68–71 (DIRG).

The protein belongs to the RapZ-like family.

In terms of biological role, displays ATPase and GTPase activities. This is Nucleotide-binding protein Moth_0258 from Moorella thermoacetica (strain ATCC 39073 / JCM 9320).